We begin with the raw amino-acid sequence, 400 residues long: 2'-5'-oligoadenylate synthase 1 (400 aa).

Residues 13-60 (DKFIEDYLLPDTCFRMQINHAIDIICGFLKERCFRGSSYPVCVSKVVK) form an interaction with dsRNA region. ATP is bound at residue serine 63. Positions 75, 77, and 148 each coordinate Mg(2+). Residues 200 to 210 (QRPTKLKSLIR) are interaction with dsRNA. ATP is bound by residues arginine 210, lysine 213, and glutamine 229. The S-geranylgeranyl cysteine moiety is linked to residue cysteine 397.

It belongs to the 2-5A synthase family. As to quaternary structure, monomer. Homotetramer. Requires Mg(2+) as cofactor. In terms of processing, prenylated at C-terminal. C-terminal prenylation is necessary to initiate a block to SARS-CoV-2 and is associated with protection from severe COVID-1. The prenylated form is targeted to perinuclear structures rich in viral dsRNA, whereas the non-prenylated form is diffusely localized and unable to initiate a detectable block to SARS-CoV-2 replication. C-terminal prenylation is also necessary to initiate a block to cardiovirus EMCV. Post-translationally, not prenylated at C-terminal. The non-prenylated form is diffusely localized and unable to initiate a detectable block to SARS-CoV-2 replication. In terms of tissue distribution, expressed in lungs.

Its subcellular location is the cytoplasm. It is found in the mitochondrion. The protein resides in the nucleus. The protein localises to the microsome. It localises to the endoplasmic reticulum. Its subcellular location is the secreted. The enzyme catalyses 3 ATP = 5'-triphosphoadenylyl-(2'-&gt;5')-adenylyl-(2'-&gt;5')-adenosine + 2 diphosphate. Its activity is regulated as follows. Produced as a latent enzyme which is activated by dsRNA generated during the course of viral infection. The dsRNA activator must be at least 15 nucleotides long, and no modification of the 2'-hydroxyl group is tolerated. ssRNA or dsDNA do not act as activators. In terms of biological role, interferon-induced, dsRNA-activated antiviral enzyme which plays a critical role in cellular innate antiviral response. In addition, it may also play a role in other cellular processes such as apoptosis, cell growth, differentiation and gene regulation. Synthesizes higher oligomers of 2'-5'-oligoadenylates (2-5A) from ATP which then bind to the inactive monomeric form of ribonuclease L (RNase L) leading to its dimerization and subsequent activation. Activation of RNase L leads to degradation of cellular as well as viral RNA, resulting in the inhibition of protein synthesis, thus terminating viral replication. Can mediate the antiviral effect via the classical RNase L-dependent pathway or an alternative antiviral pathway independent of RNase L. The secreted form displays antiviral effect against vesicular stomatitis virus (VSV), herpes simplex virus type 2 (HSV-2), and encephalomyocarditis virus (EMCV) and stimulates the alternative antiviral pathway independent of RNase L. Its function is as follows. When prenylated at C-terminal, acts as a double-stranded RNA (dsRNA) sensor specifically targeted to membranous replicative organelles in SARS coronavirus-2/SARS-CoV-2 infected cells where it binds to dsRNA structures in the SARS-CoV-2 5'-UTR and initiates a potent block to SARS-CoV-2 replication. Recognizes short stretches of dsRNA and activates RNase L. The binding is remarkably specific, with two conserved stem loops in the SARS-CoV-2 5'- untranslated region (UTR) constituting the principal viral target. The same mechanism is necessary to initiate a block to cardiovirus EMCV. Not prenylated at C-terminal, is diffusely localized and unable to initiate a detectable block to SARS-CoV-2 replication. The polypeptide is 2'-5'-oligoadenylate synthase 1 (OAS1) (Homo sapiens (Human)).